Consider the following 346-residue polypeptide: MAPRSLLLLFSGALALTETWAGSHSLRYFSTAVSRPGRGEPRYIAVEYVDDTQFLRFDSDAAIPRMEPREPWVEQEGPQYWERTTGYAKANAQTDRVALRNLLRRYNQSEAGSHTLQGMNGCDMGPDGRLLRGYHQHAYDGKDYISLNEDLRSWTAADTVAQITQRFYEAEEYAEEFRTYLEGECLELLRRYLENGKETLQRADPPKAHIAHHPISDHEATLRCWALGFYPAEITLTWQRDGEEQTQDTELVETRPAGDGNFQKWAAVVVPSGEEQRYTCHVQHEGLPQPLTLRWEQSPQPTIPIVGIVAGLVVLGAVVTGAVVAAVMWRKKSSDRNRGSYSQAAV.

The first 21 residues, 1-21 (MAPRSLLLLFSGALALTETWA), serve as a signal peptide directing secretion. The segment at 22–111 (GSHSLRYFST…LLRRYNQSEA (90 aa)) is alpha-1. Topologically, residues 22–305 (GSHSLRYFST…EQSPQPTIPI (284 aa)) are extracellular. N107 carries N-linked (GlcNAc...) asparagine glycosylation. The alpha-2 stretch occupies residues 112–203 (GSHTLQGMNG…ENGKETLQRA (92 aa)). 2 disulfides stabilise this stretch: C122–C185 and C224–C280. The segment at 204–295 (DPPKAHIAHH…GLPQPLTLRW (92 aa)) is alpha-3. Positions 206-294 (PKAHIAHHPI…EGLPQPLTLR (89 aa)) constitute an Ig-like C1-type domain. The tract at residues 296-305 (EQSPQPTIPI) is connecting peptide. The chain crosses the membrane as a helical span at residues 306 to 329 (VGIVAGLVVLGAVVTGAVVAAVMW). Topologically, residues 330–346 (RKKSSDRNRGSYSQAAV) are cytoplasmic.

Belongs to the MHC class I family. As to quaternary structure, heterodimer of an alpha chain and a beta chain (beta-2-microglobulin).

Its subcellular location is the membrane. Its function is as follows. Involved in the presentation of foreign antigens to the immune system. The polypeptide is Patr class I histocompatibility antigen, CH28 alpha chain (Pan troglodytes (Chimpanzee)).